Consider the following 1072-residue polypeptide: DNA-directed RNA polymerase subunit beta (1072 aa).

Belongs to the RNA polymerase beta chain family. In terms of assembly, in plastids the minimal PEP RNA polymerase catalytic core is composed of four subunits: alpha, beta, beta', and beta''. When a (nuclear-encoded) sigma factor is associated with the core the holoenzyme is formed, which can initiate transcription.

The protein localises to the plastid. It is found in the chloroplast. It carries out the reaction RNA(n) + a ribonucleoside 5'-triphosphate = RNA(n+1) + diphosphate. Functionally, DNA-dependent RNA polymerase catalyzes the transcription of DNA into RNA using the four ribonucleoside triphosphates as substrates. This Capsella bursa-pastoris (Shepherd's purse) protein is DNA-directed RNA polymerase subunit beta.